The sequence spans 469 residues: UDP-N-acetylmuramate--L-alanine ligase (469 aa).

113 to 119 (GTHGKTT) provides a ligand contact to ATP.

It belongs to the MurCDEF family.

The protein localises to the cytoplasm. It catalyses the reaction UDP-N-acetyl-alpha-D-muramate + L-alanine + ATP = UDP-N-acetyl-alpha-D-muramoyl-L-alanine + ADP + phosphate + H(+). It participates in cell wall biogenesis; peptidoglycan biosynthesis. Cell wall formation. The protein is UDP-N-acetylmuramate--L-alanine ligase of Neisseria meningitidis serogroup A / serotype 4A (strain DSM 15465 / Z2491).